A 206-amino-acid polypeptide reads, in one-letter code: Small ribosomal subunit protein uS4 (206 aa).

The 61-residue stretch at 96-156 (GRLDNVVYRM…EKSKKQARIK (61 aa)) folds into the S4 RNA-binding domain.

It belongs to the universal ribosomal protein uS4 family. Part of the 30S ribosomal subunit. Contacts protein S5. The interaction surface between S4 and S5 is involved in control of translational fidelity.

In terms of biological role, one of the primary rRNA binding proteins, it binds directly to 16S rRNA where it nucleates assembly of the body of the 30S subunit. Its function is as follows. With S5 and S12 plays an important role in translational accuracy. In Haemophilus influenzae (strain 86-028NP), this protein is Small ribosomal subunit protein uS4.